The following is a 93-amino-acid chain: Mitochondrial import inner membrane translocase subunit Tim10-A (93 aa).

The short motif at 32–57 is the Twin CX3C motif element; that stretch reads CHKKCVPPHYKEAELSKGESVCLDRC. 2 disulfide bridges follow: cysteine 32–cysteine 57 and cysteine 36–cysteine 53.

It belongs to the small Tim family. Heterohexamer; composed of 3 copies of TIMM9 and 3 copies of TIMM10/TIM10A, named soluble 70 kDa complex. The complex forms a 6-bladed alpha-propeller structure and associates with the TIMM22 component of the TIM22 complex. Interacts with multi-pass transmembrane proteins in transit.

The protein localises to the mitochondrion inner membrane. Mitochondrial intermembrane chaperone that participates in the import and insertion of multi-pass transmembrane proteins into the mitochondrial inner membrane. May also be required for the transfer of beta-barrel precursors from the TOM complex to the sorting and assembly machinery (SAM complex) of the outer membrane. Acts as a chaperone-like protein that protects the hydrophobic precursors from aggregation and guide them through the mitochondrial intermembrane space. The sequence is that of Mitochondrial import inner membrane translocase subunit Tim10-A (timm10-a) from Xenopus laevis (African clawed frog).